The primary structure comprises 661 residues: uncharacterized protein (661 aa).

The next 16 helical transmembrane spans lie at 27-47 (LAIGLLGVCAVVAAFGLVSGA), 68-88 (VGFFAASLAGALCLGALIHVV), 116-136 (LWLGLAATMVVIQAAHDTGVG), 150-170 (VAASEMARGWIVAAICALVVA), 179-199 (WLGHVVLLVPTVLAVVATAVT), 214-234 (AAIVFAVAFATLTGLKIAAAL), 251-271 (GALALAYGAMLLYLFIPGWAV), 279-299 (GLLAGVILTSVWLFDCWRLLV), 313-333 (GAALAMMAAMASIAAMAVMTA), 369-389 (SLIGAAGVVLAIGYAAGFAAL), 396-416 (WPVGRLIAWLTGCAALVFTSG), 435-455 (MTLNMFIPVLLVLGGPVTLAL), 488-508 (PITAFVLFVASPYIVYFTPLF), 519-539 (EFMAIHFLVVGYLFYWAIIGI), 552-572 (IGLLFAVMPFHAFFGIALMTM), and 599-619 (GGGIAWSLTELPVIMVIVALV).

To M.leprae ML1998.

Its subcellular location is the cell membrane. This is an uncharacterized protein from Mycobacterium tuberculosis (strain CDC 1551 / Oshkosh).